We begin with the raw amino-acid sequence, 499 residues long: Aspartyl/glutamyl-tRNA(Asn/Gln) amidotransferase subunit B (499 aa).

It belongs to the GatB/GatE family. GatB subfamily. As to quaternary structure, heterotrimer of A, B and C subunits.

It carries out the reaction L-glutamyl-tRNA(Gln) + L-glutamine + ATP + H2O = L-glutaminyl-tRNA(Gln) + L-glutamate + ADP + phosphate + H(+). It catalyses the reaction L-aspartyl-tRNA(Asn) + L-glutamine + ATP + H2O = L-asparaginyl-tRNA(Asn) + L-glutamate + ADP + phosphate + 2 H(+). Its function is as follows. Allows the formation of correctly charged Asn-tRNA(Asn) or Gln-tRNA(Gln) through the transamidation of misacylated Asp-tRNA(Asn) or Glu-tRNA(Gln) in organisms which lack either or both of asparaginyl-tRNA or glutaminyl-tRNA synthetases. The reaction takes place in the presence of glutamine and ATP through an activated phospho-Asp-tRNA(Asn) or phospho-Glu-tRNA(Gln). The sequence is that of Aspartyl/glutamyl-tRNA(Asn/Gln) amidotransferase subunit B from Salinispora arenicola (strain CNS-205).